The chain runs to 166 residues: Bacterial non-heme ferritin (166 aa).

In terms of domain architecture, Ferritin-like diiron spans L2–G145. Fe cation is bound by residues E17, E50, H53, E94, and Q127.

This sequence belongs to the ferritin family. Prokaryotic subfamily.

Its subcellular location is the cytoplasm. It carries out the reaction 4 Fe(2+) + O2 + 6 H2O = 4 iron(III) oxide-hydroxide + 12 H(+). Its function is as follows. Iron-storage protein. The chain is Bacterial non-heme ferritin (ftnA) from Staphylococcus epidermidis (strain ATCC 12228 / FDA PCI 1200).